Here is a 201-residue protein sequence, read N- to C-terminus: LexA repressor (201 aa).

The H-T-H motif DNA-binding region spans 28–48 (LREIAAQLGISGTLGVMKHLE). Catalysis depends on for autocatalytic cleavage activity residues Ser-120 and Lys-157.

This sequence belongs to the peptidase S24 family. In terms of assembly, homodimer.

It catalyses the reaction Hydrolysis of Ala-|-Gly bond in repressor LexA.. Represses a number of genes involved in the response to DNA damage (SOS response), including recA and lexA. In the presence of single-stranded DNA, RecA interacts with LexA causing an autocatalytic cleavage which disrupts the DNA-binding part of LexA, leading to derepression of the SOS regulon and eventually DNA repair. The chain is LexA repressor from Citrifermentans bemidjiense (strain ATCC BAA-1014 / DSM 16622 / JCM 12645 / Bem) (Geobacter bemidjiensis).